Reading from the N-terminus, the 1047-residue chain is Exportin-6 (1047 aa).

Residues 32–98 (IDTILNNYKA…KGLLLDIYLN (67 aa)) enclose the Importin N-terminal domain.

This sequence belongs to the exportin family.

Its subcellular location is the nucleus. The protein resides in the cytoplasm. Functionally, probably mediates the nuclear export of actin and profilin-actin complexes. This Dictyostelium discoideum (Social amoeba) protein is Exportin-6 (xpo6).